We begin with the raw amino-acid sequence, 832 residues long: MAAAPPPPPPPQLQSSDPSTPPQETSQVRKGKKSRGAKKPRRAAAAAAASTSSAGTMVEDPFLVLAGGKEGGFLELEEIDEADFGIFGGAVEDLGEIDRKAGKDQKKKKRKKRKRGDDDYALPGDGDLVVECEEEGEKGEKRVKKKRRSRKKRKVKEMEEKMESKEDVSDDNVEDMQDGNDMEQDNNDGLILGEDEVYAWRELRLHPLLITAVRRLGFKEPTPIQKACFPAAAHQGKDVIGAAETGSGKTLAFGLPILQRLLEEQEKAMRLSREDESTQDENSRESPLRALILTPTRELAKQVCDHLKEAAKFLRIQVVPIVGGLSMEKQERLLKRKPEIVVGTPGRLWELMSTGNQHLIKLHSLSFFVLDEADRMIERGHFHELQSIIEMLPVTNGSDEQTVGTTPSCETVPILQIKKRQTFVFSATLALSANFRKKLKRGLVTAKASASTDLSSIEALSKQARMKPNAEIVDLTKASILPEKLEESFIECSDDDKDAYLYYILSVHGQGRTIIFCTSIAALRHLSSILRVLGINVLTNHAQMQQRARMKAVDRFRESENSILVATDGFARGMDFDDVRTVIHYQLPHSTDVYIHRSGRTARKSMAGCSIALISPADKAKFYSLCKSLSKENLQQFPVDHAYMPAVMNRLTLARQIDKITRKNSQENANKSWLQRNAESMGLLLETSDSEEERVQGHKQRKATSANLQKLQQDLSELLQRPLQPKTFSRRYLAGAGVSPLLQKQLEELSKRNVKGSASVNANKGSRFVVIGQDQIEPLQALQNSGQEVCVSIDKQREKRRLAENWRRKKQKEKKSTREQKRKEKRIAKERD.

Residues Met-1 to Gln-12 show a composition bias toward pro residues. Disordered regions lie at residues Met-1–Glu-59 and Val-91–Val-173. The segment covering Arg-29 to Arg-42 has biased composition (basic residues). A compositionally biased stretch (low complexity) spans Ala-43 to Gly-55. Residues Gln-105–Lys-114 are compositionally biased toward basic residues. The span at Leu-128–Glu-137 shows a compositional bias: acidic residues. Positions Lys-141–Val-155 are enriched in basic residues. The segment covering Lys-156–Asp-167 has biased composition (basic and acidic residues). The short motif at Tyr-198–Lys-226 is the Q motif element. One can recognise a Helicase ATP-binding domain in the interval Pro-230 to Lys-447. Ala-243–Thr-250 provides a ligand contact to ATP. The DEAD box motif lies at Asp-371–Asp-374. The region spanning Lys-484–Pro-645 is the Helicase C-terminal domain. Positions Arg-800–Asp-832 are disordered. Residues Lys-814–Asp-832 are compositionally biased toward basic and acidic residues.

The protein belongs to the DEAD box helicase family. DDX24/MAK5 subfamily.

It carries out the reaction ATP + H2O = ADP + phosphate + H(+). This Oryza sativa subsp. japonica (Rice) protein is DEAD-box ATP-dependent RNA helicase 13.